A 600-amino-acid chain; its full sequence is Chaperone protein DnaK (600 aa).

Position 175 is a phosphothreonine; by autocatalysis (Thr175). The interval 572-600 (FAQQTQQQDPNNQKDDVTEATVTDDSTKK) is disordered. The span at 591–600 (ATVTDDSTKK) shows a compositional bias: polar residues.

Belongs to the heat shock protein 70 family.

Functionally, acts as a chaperone. In Ureaplasma urealyticum serovar 10 (strain ATCC 33699 / Western), this protein is Chaperone protein DnaK.